A 629-amino-acid chain; its full sequence is tRNA uridine 5-carboxymethylaminomethyl modification enzyme MnmG (629 aa).

Position 11–16 (11–16) interacts with FAD; that stretch reads GGGHAG. 273–287 is an NAD(+) binding site; sequence GPRYCPSFEDKVVRF.

This sequence belongs to the MnmG family. In terms of assembly, homodimer. Heterotetramer of two MnmE and two MnmG subunits. FAD serves as cofactor.

The protein localises to the cytoplasm. NAD-binding protein involved in the addition of a carboxymethylaminomethyl (cmnm) group at the wobble position (U34) of certain tRNAs, forming tRNA-cmnm(5)s(2)U34. This chain is tRNA uridine 5-carboxymethylaminomethyl modification enzyme MnmG, found in Mycoplasma capricolum subsp. capricolum (strain California kid / ATCC 27343 / NCTC 10154).